The chain runs to 309 residues: Homoserine O-succinyltransferase (309 aa).

The active-site Acyl-thioester intermediate is Cys-142. Substrate contacts are provided by Lys-163 and Ser-192. The active-site Proton acceptor is His-235. Glu-237 is a catalytic residue. Arg-249 serves as a coordination point for substrate.

This sequence belongs to the MetA family.

The protein resides in the cytoplasm. It carries out the reaction L-homoserine + succinyl-CoA = O-succinyl-L-homoserine + CoA. It participates in amino-acid biosynthesis; L-methionine biosynthesis via de novo pathway; O-succinyl-L-homoserine from L-homoserine: step 1/1. Its function is as follows. Transfers a succinyl group from succinyl-CoA to L-homoserine, forming succinyl-L-homoserine. This is Homoserine O-succinyltransferase from Pectobacterium carotovorum subsp. carotovorum (strain PC1).